We begin with the raw amino-acid sequence, 98 residues long: NADH-ubiquinone oxidoreductase chain 4L (98 aa).

A run of 2 helical transmembrane segments spans residues 26–46 (LVAS…MATL) and 61–81 (IILL…LISI).

This sequence belongs to the complex I subunit 4L family. As to quaternary structure, core subunit of respiratory chain NADH dehydrogenase (Complex I) which is composed of 45 different subunits.

Its subcellular location is the mitochondrion inner membrane. The catalysed reaction is a ubiquinone + NADH + 5 H(+)(in) = a ubiquinol + NAD(+) + 4 H(+)(out). Functionally, core subunit of the mitochondrial membrane respiratory chain NADH dehydrogenase (Complex I) which catalyzes electron transfer from NADH through the respiratory chain, using ubiquinone as an electron acceptor. Part of the enzyme membrane arm which is embedded in the lipid bilayer and involved in proton translocation. The chain is NADH-ubiquinone oxidoreductase chain 4L (MT-ND4L) from Macaca nigrescens (Gorontalo macaque).